We begin with the raw amino-acid sequence, 249 residues long: 23S rRNA (guanosine-2'-O-)-methyltransferase RlmB (249 aa).

Gly-200, Ile-220, and Leu-229 together coordinate S-adenosyl-L-methionine.

Belongs to the class IV-like SAM-binding methyltransferase superfamily. RNA methyltransferase TrmH family. RlmB subfamily.

The protein resides in the cytoplasm. The enzyme catalyses guanosine(2251) in 23S rRNA + S-adenosyl-L-methionine = 2'-O-methylguanosine(2251) in 23S rRNA + S-adenosyl-L-homocysteine + H(+). Its function is as follows. Specifically methylates the ribose of guanosine 2251 in 23S rRNA. The sequence is that of 23S rRNA (guanosine-2'-O-)-methyltransferase RlmB from Xylella fastidiosa (strain Temecula1 / ATCC 700964).